The primary structure comprises 426 residues: Tryptophan--tRNA ligase (426 aa).

The short motif at 66–74 (PSGEMHLGN) is the 'HIGH' region element. Residues 314 to 318 (KMSSS) carry the 'KMSKS' region motif.

Belongs to the class-I aminoacyl-tRNA synthetase family.

Its subcellular location is the cytoplasm. It catalyses the reaction tRNA(Trp) + L-tryptophan + ATP = L-tryptophyl-tRNA(Trp) + AMP + diphosphate + H(+). The polypeptide is Tryptophan--tRNA ligase (Thermoplasma volcanium (strain ATCC 51530 / DSM 4299 / JCM 9571 / NBRC 15438 / GSS1)).